A 64-amino-acid chain; its full sequence is MAKKGTRVVVTLECTEARTSTDPKRSNGVSRYTTEKNRRNTTERLELKKFNPHLNRMTIHKEIK.

The segment at 19-40 (TSTDPKRSNGVSRYTTEKNRRN) is disordered.

Belongs to the bacterial ribosomal protein bL33 family.

The protein is Large ribosomal subunit protein bL33 of Prochlorococcus marinus (strain MIT 9215).